Consider the following 117-residue polypeptide: Aspartate 1-decarboxylase (117 aa).

Serine 25 acts as the Schiff-base intermediate with substrate; via pyruvic acid in catalysis. Pyruvic acid (Ser) is present on serine 25. Threonine 57 contributes to the substrate binding site. The Proton donor role is filled by tyrosine 58. Substrate is bound at residue glycine 73–alanine 75.

It belongs to the PanD family. Heterooctamer of four alpha and four beta subunits. Pyruvate serves as cofactor. Is synthesized initially as an inactive proenzyme, which is activated by self-cleavage at a specific serine bond to produce a beta-subunit with a hydroxyl group at its C-terminus and an alpha-subunit with a pyruvoyl group at its N-terminus.

The protein resides in the cytoplasm. The enzyme catalyses L-aspartate + H(+) = beta-alanine + CO2. It functions in the pathway cofactor biosynthesis; (R)-pantothenate biosynthesis; beta-alanine from L-aspartate: step 1/1. Catalyzes the pyruvoyl-dependent decarboxylation of aspartate to produce beta-alanine. The chain is Aspartate 1-decarboxylase from Bacteroides thetaiotaomicron (strain ATCC 29148 / DSM 2079 / JCM 5827 / CCUG 10774 / NCTC 10582 / VPI-5482 / E50).